The chain runs to 185 residues: Large ribosomal subunit protein uL22 (185 aa).

The protein belongs to the universal ribosomal protein uL22 family. Part of the 50S ribosomal subunit.

Functionally, this protein binds specifically to 23S rRNA. It makes multiple contacts with different domains of the 23S rRNA in the assembled 50S subunit and ribosome. The globular domain of the protein is located near the polypeptide exit tunnel on the outside of the subunit, while an extended beta-hairpin is found that lines the wall of the exit tunnel in the center of the 70S ribosome. In Pyrobaculum neutrophilum (strain DSM 2338 / JCM 9278 / NBRC 100436 / V24Sta) (Thermoproteus neutrophilus), this protein is Large ribosomal subunit protein uL22.